Consider the following 391-residue polypeptide: ATPase GET3C (391 aa).

The transit peptide at 1–50 (MAALLLLNRVSRSTSSISLHRVAGTLGFNSFNAQIHGDRISGTLFRVRSL) directs the protein to the mitochondrion. Residue 77–84 (KGGVGKTS) coordinates ATP. Residue Asp-106 is part of the active site. Asn-328 is a binding site for ATP.

This sequence belongs to the arsA ATPase family.

It is found in the mitochondrion matrix. The catalysed reaction is ATP + H2O = ADP + phosphate + H(+). This chain is ATPase GET3C, found in Arabidopsis thaliana (Mouse-ear cress).